Reading from the N-terminus, the 338-residue chain is Phenylalanine--tRNA ligase alpha subunit (338 aa).

Residue glutamate 259 participates in Mg(2+) binding.

Belongs to the class-II aminoacyl-tRNA synthetase family. Phe-tRNA synthetase alpha subunit type 1 subfamily. Tetramer of two alpha and two beta subunits. Requires Mg(2+) as cofactor.

The protein localises to the cytoplasm. It carries out the reaction tRNA(Phe) + L-phenylalanine + ATP = L-phenylalanyl-tRNA(Phe) + AMP + diphosphate + H(+). This Janthinobacterium sp. (strain Marseille) (Minibacterium massiliensis) protein is Phenylalanine--tRNA ligase alpha subunit.